We begin with the raw amino-acid sequence, 119 residues long: Large ribosomal subunit protein uL22 (119 aa).

It belongs to the universal ribosomal protein uL22 family. Part of the 50S ribosomal subunit.

This protein binds specifically to 23S rRNA; its binding is stimulated by other ribosomal proteins, e.g. L4, L17, and L20. It is important during the early stages of 50S assembly. It makes multiple contacts with different domains of the 23S rRNA in the assembled 50S subunit and ribosome. In terms of biological role, the globular domain of the protein is located near the polypeptide exit tunnel on the outside of the subunit, while an extended beta-hairpin is found that lines the wall of the exit tunnel in the center of the 70S ribosome. This is Large ribosomal subunit protein uL22 from Trichormus variabilis (strain ATCC 29413 / PCC 7937) (Anabaena variabilis).